A 282-amino-acid chain; its full sequence is Undecaprenyl-diphosphatase (282 aa).

A run of 7 helical transmembrane segments spans residues 1 to 21 (MTLF…FLPV), 40 to 60 (GAAF…IYFY), 85 to 105 (AAMG…GLLF), 117 to 137 (YWVS…EWSV), 196 to 216 (FSFL…LYHT), 229 to 249 (AITA…AFLI), and 258 to 278 (SIFI…IAAG).

It belongs to the UppP family.

The protein resides in the cell inner membrane. The enzyme catalyses di-trans,octa-cis-undecaprenyl diphosphate + H2O = di-trans,octa-cis-undecaprenyl phosphate + phosphate + H(+). Functionally, catalyzes the dephosphorylation of undecaprenyl diphosphate (UPP). Confers resistance to bacitracin. The chain is Undecaprenyl-diphosphatase from Chlorobium phaeobacteroides (strain DSM 266 / SMG 266 / 2430).